A 236-amino-acid chain; its full sequence is Purine nucleoside phosphorylase DeoD-type (236 aa).

Histidine 5 is an a purine D-ribonucleoside binding site. Phosphate is bound by residues glycine 21, arginine 25, arginine 44, and 88–91; that span reads RVGT. Residues 180–182 and 204–205 contribute to the a purine D-ribonucleoside site; these read EME and SD. Residue aspartate 205 is the Proton donor of the active site.

It belongs to the PNP/UDP phosphorylase family. Homohexamer; trimer of homodimers.

The catalysed reaction is a purine D-ribonucleoside + phosphate = a purine nucleobase + alpha-D-ribose 1-phosphate. The enzyme catalyses a purine 2'-deoxy-D-ribonucleoside + phosphate = a purine nucleobase + 2-deoxy-alpha-D-ribose 1-phosphate. Its function is as follows. Catalyzes the reversible phosphorolytic breakdown of the N-glycosidic bond in the beta-(deoxy)ribonucleoside molecules, with the formation of the corresponding free purine bases and pentose-1-phosphate. The sequence is that of Purine nucleoside phosphorylase DeoD-type from Shewanella amazonensis (strain ATCC BAA-1098 / SB2B).